The primary structure comprises 649 residues: Phospholipase A1 PLIP1, chloroplastic (649 aa).

A chloroplast-targeting transit peptide spans 1-67; the sequence is MAFNTAMAST…NNRILAVSVR (67 aa). Positions 420-424 match the GXSXG motif; it reads GHSLG. Ser422 serves as the catalytic Acyl-ester intermediate. Active-site charge relay system residues include Asp483 and His593.

Belongs to the AB hydrolase superfamily. Lipase family.

It is found in the plastid. It localises to the chloroplast thylakoid membrane. The enzyme catalyses a 1,2-diacyl-sn-glycero-3-phosphocholine + H2O = a 2-acyl-sn-glycero-3-phosphocholine + a fatty acid + H(+). The catalysed reaction is a 1,2-diacyl-3-O-(beta-D-galactosyl)-sn-glycerol + 2 H2O = 3-beta-D-galactosyl-sn-glycerol + 2 a fatty acid + 2 H(+). Functionally, sn-1-specific phospholipase A1 involved in seed oil biosynthesis. Hydrolyzes polyunsaturated acyl groups from a unique chloroplast-specific phosphatidylglycerol (PG) that contains 16:1 delta 3-trans as its second acyl group. The polyunsaturated acyl groups released by PLIP1 are exported from the chloroplast, reincorporated into phosphatidylcholine (PC), and ultimately enter seed triacylglycerol (TAG). In vitro, possesses broad substrate specificity. Can hydrolyze the galactolipid monogalactosyldiacylglycerol (MGDG), and the phoshpolipids phosphatidylcholine (PC), phosphatidylethanolamine (PE), phosphatidic acid (PA), phosphatidylserine (PS) phosphatidylglycerol (PG) and phosphatidylinositol (PI). The protein is Phospholipase A1 PLIP1, chloroplastic of Arabidopsis thaliana (Mouse-ear cress).